We begin with the raw amino-acid sequence, 393 residues long: S-adenosylmethionine synthase 4 (393 aa).

A Mg(2+)-binding site is contributed by Glu-9. Residue His-15 coordinates ATP. Position 43 (Glu-43) interacts with K(+). Residues Glu-56 and Gln-99 each coordinate L-methionine. Residues Asp-167–Lys-169, Ser-235–Phe-238, Asp-246, Arg-252–Lys-253, Ala-269, Lys-273, and Lys-277 each bind ATP. L-methionine is bound at residue Asp-246. Lys-277 contributes to the L-methionine binding site.

The protein belongs to the AdoMet synthase family. In terms of assembly, homotetramer. Requires Mn(2+) as cofactor. It depends on Mg(2+) as a cofactor. The cofactor is Co(2+). K(+) serves as cofactor.

Its subcellular location is the cytoplasm. The enzyme catalyses L-methionine + ATP + H2O = S-adenosyl-L-methionine + phosphate + diphosphate. It functions in the pathway amino-acid biosynthesis; S-adenosyl-L-methionine biosynthesis; S-adenosyl-L-methionine from L-methionine: step 1/1. Catalyzes the formation of S-adenosylmethionine from methionine and ATP. The reaction comprises two steps that are both catalyzed by the same enzyme: formation of S-adenosylmethionine (AdoMet) and triphosphate, and subsequent hydrolysis of the triphosphate. The sequence is that of S-adenosylmethionine synthase 4 (METK4) from Vitis vinifera (Grape).